Reading from the N-terminus, the 168-residue chain is Crossover junction endodeoxyribonuclease RuvC (168 aa).

Active-site residues include aspartate 9, glutamate 70, and aspartate 145. The Mg(2+) site is built by aspartate 9, glutamate 70, and aspartate 145.

The protein belongs to the RuvC family. In terms of assembly, homodimer which binds Holliday junction (HJ) DNA. The HJ becomes 2-fold symmetrical on binding to RuvC with unstacked arms; it has a different conformation from HJ DNA in complex with RuvA. In the full resolvosome a probable DNA-RuvA(4)-RuvB(12)-RuvC(2) complex forms which resolves the HJ. It depends on Mg(2+) as a cofactor.

It localises to the cytoplasm. The enzyme catalyses Endonucleolytic cleavage at a junction such as a reciprocal single-stranded crossover between two homologous DNA duplexes (Holliday junction).. Functionally, the RuvA-RuvB-RuvC complex processes Holliday junction (HJ) DNA during genetic recombination and DNA repair. Endonuclease that resolves HJ intermediates. Cleaves cruciform DNA by making single-stranded nicks across the HJ at symmetrical positions within the homologous arms, yielding a 5'-phosphate and a 3'-hydroxyl group; requires a central core of homology in the junction. The consensus cleavage sequence is 5'-(A/T)TT(C/G)-3'. Cleavage occurs on the 3'-side of the TT dinucleotide at the point of strand exchange. HJ branch migration catalyzed by RuvA-RuvB allows RuvC to scan DNA until it finds its consensus sequence, where it cleaves and resolves the cruciform DNA. This Chlamydia pneumoniae (Chlamydophila pneumoniae) protein is Crossover junction endodeoxyribonuclease RuvC.